A 73-amino-acid chain; its full sequence is Conotoxin MaI51 (73 aa).

The first 19 residues, 1–19 (MQKLTILLLVAAVLLSTQA), serve as a signal peptide directing secretion. Residues 20 to 41 (LNQEKRPKEMINVLSKGKTNAE) constitute a propeptide that is removed on maturation. Glutamine 46 bears the Pyrrolidone carboxylic acid mark. 3 disulfides stabilise this stretch: cysteine 47-cysteine 61, cysteine 54-cysteine 65, and cysteine 60-cysteine 69. Position 72 is an isoleucine amide (isoleucine 72).

The protein belongs to the conotoxin O2 superfamily. As to expression, expressed by the venom duct.

Its subcellular location is the secreted. The chain is Conotoxin MaI51 from Conus marmoreus (Marble cone).